We begin with the raw amino-acid sequence, 464 residues long: Glutamate--tRNA ligase (464 aa).

Positions 9 to 19 (PSPTGYLHIGG) match the 'HIGH' region motif. The 'KMSKS' region motif lies at 242-246 (KISKR). Lys245 is a binding site for ATP.

This sequence belongs to the class-I aminoacyl-tRNA synthetase family. Glutamate--tRNA ligase type 1 subfamily. In terms of assembly, monomer.

It localises to the cytoplasm. The enzyme catalyses tRNA(Glu) + L-glutamate + ATP = L-glutamyl-tRNA(Glu) + AMP + diphosphate. Its function is as follows. Catalyzes the attachment of glutamate to tRNA(Glu) in a two-step reaction: glutamate is first activated by ATP to form Glu-AMP and then transferred to the acceptor end of tRNA(Glu). The sequence is that of Glutamate--tRNA ligase from Neisseria meningitidis serogroup C / serotype 2a (strain ATCC 700532 / DSM 15464 / FAM18).